Here is a 471-residue protein sequence, read N- to C-terminus: 8-amino-7-oxononanoate synthase (471 aa).

Arg40 contacts substrate. A pyridoxal 5'-phosphate-binding site is contributed by 131–132 (GY). Substrate is bound at residue His156. Pyridoxal 5'-phosphate is bound by residues Ser202, His230, and Thr258. Lys261 is subject to N6-(pyridoxal phosphate)lysine. Thr377 lines the substrate pocket. Residues 409–471 (SEGQTRREAE…LGAARRETAA (63 aa)) are disordered.

It belongs to the class-II pyridoxal-phosphate-dependent aminotransferase family. BioF subfamily. In terms of assembly, homodimer. Requires pyridoxal 5'-phosphate as cofactor.

It catalyses the reaction 6-carboxyhexanoyl-[ACP] + L-alanine + H(+) = (8S)-8-amino-7-oxononanoate + holo-[ACP] + CO2. It participates in cofactor biosynthesis; biotin biosynthesis. In terms of biological role, catalyzes the decarboxylative condensation of pimeloyl-[acyl-carrier protein] and L-alanine to produce 8-amino-7-oxononanoate (AON), [acyl-carrier protein], and carbon dioxide. The chain is 8-amino-7-oxononanoate synthase from Burkholderia ambifaria (strain ATCC BAA-244 / DSM 16087 / CCUG 44356 / LMG 19182 / AMMD) (Burkholderia cepacia (strain AMMD)).